We begin with the raw amino-acid sequence, 829 residues long: Periplasmic nitrate reductase (829 aa).

Positions 1–31 form a signal peptide, tat-type signal; it reads MKLSRRDFMKANAVAAAAAAAGLTIPTVARA. The 57-residue stretch at 40–96 folds into the 4Fe-4S Mo/W bis-MGD-type domain; that stretch reads ITWDKAPCRFCGTGCGVLVGTQNGRIVASQGDPDAPVNRGLNCIKGYFLPKIMYGKD. Residues Cys-47, Cys-50, Cys-54, and Cys-82 each contribute to the [4Fe-4S] cluster site. Mo-bis(molybdopterin guanine dinucleotide)-binding positions include Lys-84, Gln-151, Asn-176, Cys-180, 213–220, 263–265, Met-373, Gln-377, Asn-483, 509–510, Lys-532, Asp-559, and 719–728; these read WGSNMAEM, QSD, SD, and TGRVLEHWHT. Phe-795 provides a ligand contact to substrate. Asn-803 and Lys-820 together coordinate Mo-bis(molybdopterin guanine dinucleotide).

The protein belongs to the prokaryotic molybdopterin-containing oxidoreductase family. NasA/NapA/NarB subfamily. As to quaternary structure, component of the periplasmic nitrate reductase NapAB complex composed of NapA and NapB. [4Fe-4S] cluster serves as cofactor. It depends on Mo-bis(molybdopterin guanine dinucleotide) as a cofactor. Post-translationally, predicted to be exported by the Tat system. The position of the signal peptide cleavage has not been experimentally proven.

It localises to the periplasm. It carries out the reaction 2 Fe(II)-[cytochrome] + nitrate + 2 H(+) = 2 Fe(III)-[cytochrome] + nitrite + H2O. Its function is as follows. Catalytic subunit of the periplasmic nitrate reductase complex NapAB. Receives electrons from NapB and catalyzes the reduction of nitrate to nitrite. This chain is Periplasmic nitrate reductase, found in Edwardsiella ictaluri (strain 93-146).